Here is a 4882-residue protein sequence, read N- to C-terminus: Dual E2 ubiquitin-conjugating enzyme/E3 ubiquitin-protein ligase BIRC6 (4882 aa).

2 WD repeats span residues 71–109 (DGLHSLSYHPALNAILAVTSRGTIKVIDGTSGATLQASA) and 110–139 (LSAKPGGQVKCQYISAVDKVIFVDDYAVGC). A BIR repeat occupies 292-362 (RRETFTSWPH…RHSPNCPFVK (71 aa)). Residues cysteine 331, cysteine 334, histidine 351, and cysteine 358 each contribute to the Zn(2+) site. A WD 3 repeat occupies 382–429 (LPSADGADRIACFGSGSCPQFLAAATKRGKICIWDVSKLMKVHLKFEI). Disordered stretches follow at residues 468–502 (DIPKLEGDSDDLLEDSDSEEHSRSDSVTGHTSQKE), 542–561 (GANPSLTNSKSEKTKEKHQE), and 582–622 (ATSP…SELN). A compositionally biased stretch (acidic residues) spans 475-485 (DSDDLLEDSDS). Phosphoserine occurs at positions 476, 483, and 485. 4 WD repeats span residues 504-723 (MEVS…VQCL), 733-854 (TLCI…QHIK), 855-931 (DPQD…AKVE), and 932-970 (PPKKEGTEEQDTFVSVIYCSGTDRLCACTKGGELHFLQI). A compositionally biased stretch (basic and acidic residues) spans 551–561 (KSEKTKEKHQE). Residues 582-591 (ATSPISSNSH) are compositionally biased toward polar residues. Residues serine 584 and serine 593 each carry the phosphoserine modification. The segment covering 598 to 622 (SRTQGESISEQGSTDNESCTNSELN) has biased composition (polar residues). Positions 1057–1077 (QQQRRHPQHLHQQHHGDAAQH) are disordered. Residues 1060–1069 (RRHPQHLHQQ) show a composition bias toward basic residues. Residue threonine 1724 is modified to Phosphothreonine. Phosphoserine occurs at positions 2245 and 2978. Residues 2969 to 2998 (VTTNTTDSVSDEEKVSGGKDVNGSSASTPG) form a disordered region. The segment at 3212 to 3216 (HRRAR) is HRRAR loop; important for DIABLO/SMAC and HTRA2 binding. Residues 3842–4092 (DEKVTMFLQS…ESLLETCPIQ (251 aa)) enclose the Ubiquitin-like domain. Disordered regions lie at residues 3908–3927 (SEQKDDKEKKNHEEKEKVKA) and 3943–3973 (LKSQSKRAMASTPPRPPSRRGRTIPDKIGSA). Threonine 3954 is subject to Phosphothreonine. Serine 4047 carries the post-translational modification Phosphoserine. Residues 4285–4304 (VPNSSLSQTEPQVSNSHNPT) form a disordered region. The segment covering 4286-4304 (PNSSLSQTEPQVSNSHNPT) has biased composition (polar residues). Residues 4598–4765 (ARARRLAQEA…IRQATVKWAM (168 aa)) enclose the UBC core domain. The active-site Glycyl thioester intermediate is the cysteine 4691. The tract at residues 4857–4882 (AGAEDTLTHDHVNPSSSKDLPSDFQL) is disordered. Over residues 4869 to 4882 (NPSSSKDLPSDFQL) the composition is skewed to polar residues.

Belongs to the BIRC6 family. As to quaternary structure, homodimer; antiparallel. Interacts with DIABLO/SMAC, likely with higher affinity to SMAC dimer than SMAC monomer; this interaction blocks the substrate-binding site and inhibits the caspase inhibition activity of BIRC6. Interacts with RNF41, KIF23/MKLP1, USP8/UBPY, BIRC5/survivin, MAP2K1/MEK1, RAB8A/RAB8, RAB11A/RAB11, PLK1, EXOC3/SEC6 and EXOC4/SEC8. In terms of processing, ubiquitinated. Ubiquitination is mediated by RNF41 E3 ligase and leads to proteasomal degradation, impairing inhibition of apoptosis. Deubiquitinated by USP8/UBPY. Autoubiquitinated; mediated by E1 ubiquitin activating enzyme UBA6. Proteolytically cleaved. Acts as substrate for CASP3, CASP6, CASP7, CASP9 and HTRA2. As to expression, widely expressed. Highly expressed in the brain and kidney.

The protein localises to the golgi apparatus. The protein resides in the trans-Golgi network membrane. It is found in the endosome. Its subcellular location is the cytoplasm. It localises to the cytoskeleton. The protein localises to the spindle pole. The protein resides in the microtubule organizing center. It is found in the centrosome. Its subcellular location is the midbody. It localises to the midbody ring. The catalysed reaction is S-ubiquitinyl-[E1 ubiquitin-activating enzyme]-L-cysteine + [acceptor protein]-L-lysine = [E1 ubiquitin-activating enzyme]-L-cysteine + N(6)-monoubiquitinyl-[acceptor protein]-L-lysine.. Inhibited by DIABLO/SMAC, which competes for the substrate-binding sites on BIRC6. BIRC6 inhibits caspases and protease by ubiquitination but BIRC6 itself is subjected to protease cleavage by CASP3, CASP6, CASP7, CASP9 and HTRA2 by protease cleavage. Anti-apoptotic protein known as inhibitor of apoptosis (IAP) which can regulate cell death by controlling caspases and by acting as an E3 ubiquitin-protein ligase. Unlike most IAPs, does not contain a RING domain and it is not a RING-type E3 ligase. Instead acts as a dual E2/E3 enzyme that combines ubiquitin conjugating (E2) and ubiquitin ligase (E3) activities in a single polypeptide. Ubiquitination is mediated by a non-canonical E1 ubiquitin activating enzyme UBA6. Ubiquitinates CASP3, CASP7 and CASP9 and inhibits their caspase activity; also ubiquitinates their procaspases but to a weaker extent. Ubiquitinates pro-apoptotic factors DIABLO/SMAC and HTRA2. DIABLO/SMAC antagonizes the caspase inhibition activity of BIRC6 by competing for the same binding sites as the caspases. Ubiquitinates the autophagy protein MAP1LC3B; this activity is also inhibited by DIABLO/SMAC. Important regulator for the final stages of cytokinesis. Crucial for normal vesicle targeting to the site of abscission, but also for the integrity of the midbody and the midbody ring, and its striking ubiquitin modification. Required for normal placenta development. This chain is Dual E2 ubiquitin-conjugating enzyme/E3 ubiquitin-protein ligase BIRC6 (Birc6), found in Mus musculus (Mouse).